Reading from the N-terminus, the 140-residue chain is Small ribosomal subunit protein bS16 (140 aa).

Positions 86-140 are disordered; it reads TVGKAKQAAKREEEAKQAAKEAAEAKAAAEAEAAAAAEAAKAEDAPDGETESSEG. Residues 94–114 show a composition bias toward basic and acidic residues; that stretch reads AKREEEAKQAAKEAAEAKAAA. Over residues 115–124 the composition is skewed to low complexity; it reads EAEAAAAAEA. The segment covering 130 to 140 has biased composition (acidic residues); sequence APDGETESSEG.

The protein belongs to the bacterial ribosomal protein bS16 family.

The protein is Small ribosomal subunit protein bS16 of Parasynechococcus marenigrum (strain WH8102).